Consider the following 629-residue polypeptide: DNA ligase B (629 aa).

Lysine 151 (N6-AMP-lysine intermediate) is an active-site residue. The span at 588–597 (LQKQHGTNTR) shows a compositional bias: polar residues. The interval 588–629 (LQKQHGTNTRNEQKGDVRRVDVKQDNGTTWLPEQDSNLRPND) is disordered. Basic and acidic residues predominate over residues 598-611 (NEQKGDVRRVDVKQ). Residues 612–629 (DNGTTWLPEQDSNLRPND) show a composition bias toward polar residues.

Belongs to the NAD-dependent DNA ligase family. LigB subfamily.

The catalysed reaction is NAD(+) + (deoxyribonucleotide)n-3'-hydroxyl + 5'-phospho-(deoxyribonucleotide)m = (deoxyribonucleotide)n+m + AMP + beta-nicotinamide D-nucleotide.. Functionally, catalyzes the formation of phosphodiester linkages between 5'-phosphoryl and 3'-hydroxyl groups in double-stranded DNA using NAD as a coenzyme and as the energy source for the reaction. The chain is DNA ligase B from Chromohalobacter salexigens (strain ATCC BAA-138 / DSM 3043 / CIP 106854 / NCIMB 13768 / 1H11).